The following is a 110-amino-acid chain: U1-lycotoxin-Ls1bb (110 aa).

The first 20 residues, 1-20, serve as a signal peptide directing secretion; that stretch reads MKFVLLFGVLLVTLFSYSSA. Residues 21-44 constitute a propeptide that is removed on maturation; it reads EMLDDFDQADEDELLSLIEKEEAR. 4 disulfides stabilise this stretch: Cys47–Cys62, Cys54–Cys71, Cys61–Cys89, and Cys73–Cys87.

The protein belongs to the neurotoxin 19 (CSTX) family. 03 subfamily. Expressed by the venom gland.

The protein localises to the secreted. The chain is U1-lycotoxin-Ls1bb from Lycosa singoriensis (Wolf spider).